Consider the following 436-residue polypeptide: MSTGFFGDIAKIKYEGPESTNPLAFRHYNPDEIVLGKRMEDHLRFAVAYWHTFVWPGGDPFGGQTFERPWFKDTMDAAKLKADVAFEFFQLLGVPFYCFHDADVRPEGRNFAENTSNLNEIVDHFAEKQAATGVKLLWGTANLFSNRRYMGGAATNPDPDVFAFAAATVKTCIDATQRLGGENYVLWGGREGYETLLNTDLKRELDQLGRFVNLVVEYKHKIGFKGAILIEPKPQEPTKHQYDFDVATVYGFLKKYGLENEVKVNIEQGHAILAGHSFEHELALANALGIFGSIDMNRNDYQSGWDTDQFPNNVPEMALAYHHVLSGGGFKTGGTNFDAKLRRQSIDPEDLLIGHIGGMDCCARGLKAAAKMVEDKALSGPLEKRYAGWNVPEAKKMLDGGFSLDEIEAWVRKADLNPQPKSGRQEYLENVVNRYV.

2 residues coordinate Mg(2+): aspartate 306 and aspartate 308.

This sequence belongs to the xylose isomerase family. Homotetramer. Mg(2+) is required as a cofactor.

It is found in the cytoplasm. It catalyses the reaction alpha-D-xylose = alpha-D-xylulofuranose. The sequence is that of Xylose isomerase from Sinorhizobium fredii (strain NBRC 101917 / NGR234).